The following is a 398-amino-acid chain: MKQLTILGSTGSIGCSTLDVVRHNPEHFRVVALVAGKNVTRMVEQCLEFSPRYAVMDDEASAKLLKTMLQQQGSRTEVLSGQQAACDMAALEDVDQVMAAIVGAAGLLPTLAAIRAGKTILLANKESLVTCGRLFMDAVKQSKAQLLPVDSEHNAIFQSLPQPIQHNLGYADLEQNGVVSILLTGSGGPFRETPLRDLATMTPDQACRHPNWSMGRKISVDSATMMNKGLEYIEARWLFNASASQMEVLIHPQSVIHSMVRYQDGSVLAQLGEPDMRTPIAHTMAWPNRVNSGVKPLDFCKLSALTFAAPDYDRYPCLKLAMEAFEQGQAATTALNAANEITVAAFLAQQIRFTDIAALNLSVLEKMDMREPQCVDDVLSVDASAREVARKEVMRLAS.

NADPH-binding residues include T10, G11, S12, I13, G36, K37, N38, and N124. K125 is a binding site for 1-deoxy-D-xylulose 5-phosphate. E126 is an NADPH binding site. Position 150 (D150) interacts with Mn(2+). 1-deoxy-D-xylulose 5-phosphate is bound by residues S151, E152, S186, and H209. Residue E152 coordinates Mn(2+). Position 215 (G215) interacts with NADPH. 1-deoxy-D-xylulose 5-phosphate-binding residues include S222, N227, K228, and E231. Residue E231 coordinates Mn(2+).

It belongs to the DXR family. As to quaternary structure, homodimer. Mg(2+) serves as cofactor. It depends on Mn(2+) as a cofactor.

It carries out the reaction 2-C-methyl-D-erythritol 4-phosphate + NADP(+) = 1-deoxy-D-xylulose 5-phosphate + NADPH + H(+). Its pathway is isoprenoid biosynthesis; isopentenyl diphosphate biosynthesis via DXP pathway; isopentenyl diphosphate from 1-deoxy-D-xylulose 5-phosphate: step 1/6. In terms of biological role, catalyzes the NADPH-dependent rearrangement and reduction of 1-deoxy-D-xylulose-5-phosphate (DXP) to 2-C-methyl-D-erythritol 4-phosphate (MEP). This is 1-deoxy-D-xylulose 5-phosphate reductoisomerase from Escherichia coli O157:H7.